The chain runs to 1434 residues: Nitric oxide synthase 1 (1434 aa).

The interval 1–205 (MEDHMFGVQQ…LQGRGENNEL (205 aa)) is interaction with NOSIP. The PDZ domain maps to 17–99 (SVRLFKRKVG…ETHVVLILRG (83 aa)). 2 disordered regions span residues 112–192 (TGDG…KKAT) and 276–302 (NNPY…PSKC). Residues 163–245 (YDDGQEAGSL…MGIQVDRDLD (83 aa)) are interaction with DYNLL1/PIN. The segment covering 285–299 (PPTSGKQSPTKNGSP) has biased composition (polar residues). Ser339 is a (6R)-L-erythro-5,6,7,8-tetrahydrobiopterin binding site. Residue Cys420 participates in heme b binding. Residues Gln483, Trp592, Tyr593, and Glu597 each contribute to the L-arginine site. Residues Val682, Trp683, and Phe696 each contribute to the (6R)-L-erythro-5,6,7,8-tetrahydrobiopterin site. Tyr711 contacts heme b. The interval 730 to 750 (KRRAIGFKKLAEAVKFSAKLM) is calmodulin-binding. The Flavodoxin-like domain occupies 760-940 (ATILYATETG…AFRTWAKKVF (181 aa)). Positions 766, 767, 768, 770, 771, 812, 813, and 817 each coordinate FMN. Phosphoserine is present on residues Ser852, Ser862, and Ser863. Residues Ser891, His896, Cys898, Glu924, and Gln928 each coordinate FMN. An FAD-binding FR-type domain is found at 995–1242 (KRVSAARLLS…VRGAPSFHLP (248 aa)). Arg1015 contributes to the NADP(+) binding site. Residues His1037, Arg1178, Tyr1179, Tyr1180, Ser1181, Thr1196, and Ala1198 each coordinate FAD. NADP(+) is bound at residue Ser1201. Positions 1202, 1215, 1216, and 1217 each coordinate FAD. 10 residues coordinate NADP(+): Thr1256, Arg1289, Ser1318, Arg1319, Lys1325, Tyr1327, Gln1329, Asp1362, Thr1403, and Arg1405.

This sequence belongs to the NOS family. As to quaternary structure, homodimer. Interacts with DLG4; the interaction possibly being prevented by the association between NOS1 and CAPON. Forms a ternary complex with CAPON and RASD1. Forms a ternary complex with CAPON and SYN1. Interacts with ZDHHC23. Interacts with NOSIP; which may impair its synaptic location. Interacts with HTR4. Interacts with SLC6A4. Interacts with VAC14. Interacts (via N-terminal domain) with DLG4 (via N-terminal tandem pair of PDZ domains). Interacts with SLC6A4. Forms a complex with ASL, ASS1 and SLC7A1; the complex regulates cell-autonomous L-arginine synthesis and citrulline recycling while channeling extracellular L-arginine to nitric oxide synthesis pathway. Interacts with DMD; localizes NOS1 to sarcolemma in muscle cells. Interacts with DYNLL1; inhibits the nitric oxide synthase activity. The cofactor is heme b. Requires FAD as cofactor. FMN is required as a cofactor. (6R)-L-erythro-5,6,7,8-tetrahydrobiopterin serves as cofactor. In terms of processing, ubiquitinated; mediated by STUB1/CHIP in the presence of Hsp70 and Hsp40 (in vitro). In terms of tissue distribution, isoform 1 is ubiquitously expressed: detected in skeletal muscle and brain, also in testis, lung and kidney, and at low levels in heart, adrenal gland and retina. Not detected in the platelets. Isoform 3 is expressed only in testis. Isoform 4 is detected in testis, skeletal muscle, lung, and kidney, at low levels in the brain, but not in the heart and adrenal gland.

Its subcellular location is the cell membrane. It localises to the sarcolemma. The protein resides in the cell projection. It is found in the dendritic spine. The enzyme catalyses 2 L-arginine + 3 NADPH + 4 O2 + H(+) = 2 L-citrulline + 2 nitric oxide + 3 NADP(+) + 4 H2O. Stimulated by calcium/calmodulin. Inhibited by DYNLL1 that prevents the dimerization of the protein. Inhibited by NOSIP. Produces nitric oxide (NO) which is a messenger molecule with diverse functions throughout the body. In the brain and peripheral nervous system, NO displays many properties of a neurotransmitter. Probably has nitrosylase activity and mediates cysteine S-nitrosylation of cytoplasmic target proteins such SRR. In Homo sapiens (Human), this protein is Nitric oxide synthase 1.